Consider the following 150-residue polypeptide: Large ribosomal subunit protein bL9 (150 aa).

The protein belongs to the bacterial ribosomal protein bL9 family.

Functionally, binds to the 23S rRNA. The protein is Large ribosomal subunit protein bL9 of Aromatoleum aromaticum (strain DSM 19018 / LMG 30748 / EbN1) (Azoarcus sp. (strain EbN1)).